A 271-amino-acid chain; its full sequence is uncharacterized protein (271 aa).

It belongs to the metallo-dependent hydrolases superfamily. Peptidase M19 family.

This is an uncharacterized protein from Klebsiella pneumoniae.